We begin with the raw amino-acid sequence, 288 residues long: S-methyl-5'-thioadenosine phosphorylase (288 aa).

Phosphate-binding positions include Ser10, 52–53 (RH), and 85–86 (TA). Met188 is a substrate binding site. Residue Thr189 coordinates phosphate. 212–214 (DYD) provides a ligand contact to substrate.

Belongs to the PNP/MTAP phosphorylase family. MTAP subfamily. As to quaternary structure, homotrimer.

It localises to the cytoplasm. Its subcellular location is the nucleus. The enzyme catalyses S-methyl-5'-thioadenosine + phosphate = 5-(methylsulfanyl)-alpha-D-ribose 1-phosphate + adenine. Its pathway is amino-acid biosynthesis; L-methionine biosynthesis via salvage pathway; S-methyl-5-thio-alpha-D-ribose 1-phosphate from S-methyl-5'-thioadenosine (phosphorylase route): step 1/1. In terms of biological role, catalyzes the reversible phosphorylation of S-methyl-5'-thioadenosine (MTA) to adenine and 5-methylthioribose-1-phosphate. Involved in the breakdown of MTA, a major by-product of polyamine biosynthesis. Responsible for the first step in the methionine salvage pathway after MTA has been generated from S-adenosylmethionine. Has broad substrate specificity with 6-aminopurine nucleosides as preferred substrates. The protein is S-methyl-5'-thioadenosine phosphorylase of Caenorhabditis elegans.